Here is a 208-residue protein sequence, read N- to C-terminus: Ribosomal RNA small subunit methyltransferase G (208 aa).

Residues glycine 76, leucine 81, 127-128, and arginine 142 each bind S-adenosyl-L-methionine; that span reads VE.

The protein belongs to the methyltransferase superfamily. RNA methyltransferase RsmG family.

It is found in the cytoplasm. The enzyme catalyses guanosine(527) in 16S rRNA + S-adenosyl-L-methionine = N(7)-methylguanosine(527) in 16S rRNA + S-adenosyl-L-homocysteine. Its function is as follows. Specifically methylates the N7 position of guanine in position 527 of 16S rRNA. This Legionella pneumophila subsp. pneumophila (strain Philadelphia 1 / ATCC 33152 / DSM 7513) protein is Ribosomal RNA small subunit methyltransferase G.